A 371-amino-acid chain; its full sequence is Probable beta-1,4-xylosyltransferase GT43A (371 aa).

The Cytoplasmic portion of the chain corresponds to 1–19 (MGTAAVAAAERPKQRRSSH). Residues 20 to 42 (LWKKALLHFSLCFVMGFFTGFAP) traverse the membrane as a helical; Signal-anchor for type II membrane protein segment. Over 43–371 (SSSSSWRAGS…TSTPKTHNRR (329 aa)) the chain is Lumenal. 2 N-linked (GlcNAc...) asparagine glycosylation sites follow: asparagine 176 and asparagine 299.

It belongs to the glycosyltransferase 43 family.

It localises to the golgi apparatus membrane. Its function is as follows. Probable beta-1,4-xylosyltransferase involved in xylan biosynthesis in cell walls. The chain is Probable beta-1,4-xylosyltransferase GT43A from Oryza sativa subsp. japonica (Rice).